A 203-amino-acid polypeptide reads, in one-letter code: Outer-membrane lipoprotein carrier protein (203 aa).

Residues 1 to 21 (MKKIAITCALLSSLVASSVWA) form the signal peptide.

Belongs to the LolA family. Monomer.

It is found in the periplasm. Functionally, participates in the translocation of lipoproteins from the inner membrane to the outer membrane. Only forms a complex with a lipoprotein if the residue after the N-terminal Cys is not an aspartate (The Asp acts as a targeting signal to indicate that the lipoprotein should stay in the inner membrane). The polypeptide is Outer-membrane lipoprotein carrier protein (Escherichia coli O139:H28 (strain E24377A / ETEC)).